Here is a 417-residue protein sequence, read N- to C-terminus: Serine hydroxymethyltransferase (417 aa).

(6S)-5,6,7,8-tetrahydrofolate contacts are provided by residues leucine 121 and 125 to 127; that span reads GHL. The residue at position 229 (lysine 229) is an N6-(pyridoxal phosphate)lysine. 355-357 contributes to the (6S)-5,6,7,8-tetrahydrofolate binding site; the sequence is SPF.

The protein belongs to the SHMT family. Homodimer. The cofactor is pyridoxal 5'-phosphate.

It localises to the cytoplasm. It carries out the reaction (6R)-5,10-methylene-5,6,7,8-tetrahydrofolate + glycine + H2O = (6S)-5,6,7,8-tetrahydrofolate + L-serine. It participates in one-carbon metabolism; tetrahydrofolate interconversion. The protein operates within amino-acid biosynthesis; glycine biosynthesis; glycine from L-serine: step 1/1. Its function is as follows. Catalyzes the reversible interconversion of serine and glycine with tetrahydrofolate (THF) serving as the one-carbon carrier. This reaction serves as the major source of one-carbon groups required for the biosynthesis of purines, thymidylate, methionine, and other important biomolecules. Also exhibits THF-independent aldolase activity toward beta-hydroxyamino acids, producing glycine and aldehydes, via a retro-aldol mechanism. This Photorhabdus laumondii subsp. laumondii (strain DSM 15139 / CIP 105565 / TT01) (Photorhabdus luminescens subsp. laumondii) protein is Serine hydroxymethyltransferase.